A 295-amino-acid chain; its full sequence is GTPase Era (295 aa).

An Era-type G domain is found at 3-171 (KSGFITVIGR…LELMKKYLPE (169 aa)). Positions 11–18 (GRPNVGKS) are G1. Residue 11 to 18 (GRPNVGKS) participates in GTP binding. The tract at residues 37 to 41 (QTTRN) is G2. The G3 stretch occupies residues 58-61 (DTPG). Residues 58–62 (DTPGM) and 120–123 (NKID) each bind GTP. The tract at residues 120–123 (NKID) is G4. Positions 150-152 (ISA) are G5. Residues 202 to 279 (LSEEVPHGIA…SLKVWVKVKK (78 aa)) form the KH type-2 domain.

Belongs to the TRAFAC class TrmE-Era-EngA-EngB-Septin-like GTPase superfamily. Era GTPase family. In terms of assembly, monomer.

It is found in the cytoplasm. Its subcellular location is the cell membrane. Functionally, an essential GTPase that binds both GDP and GTP, with rapid nucleotide exchange. Plays a role in 16S rRNA processing and 30S ribosomal subunit biogenesis and possibly also in cell cycle regulation and energy metabolism. In Clostridium tetani (strain Massachusetts / E88), this protein is GTPase Era.